Consider the following 354-residue polypeptide: DNA polymerase IV (354 aa).

The UmuC domain maps to Ile8–Gly189. 2 residues coordinate Mg(2+): Asp12 and Asp107. Glu108 is a catalytic residue.

Belongs to the DNA polymerase type-Y family. In terms of assembly, monomer. Mg(2+) serves as cofactor.

Its subcellular location is the cytoplasm. It carries out the reaction DNA(n) + a 2'-deoxyribonucleoside 5'-triphosphate = DNA(n+1) + diphosphate. Poorly processive, error-prone DNA polymerase involved in untargeted mutagenesis. Copies undamaged DNA at stalled replication forks, which arise in vivo from mismatched or misaligned primer ends. These misaligned primers can be extended by PolIV. Exhibits no 3'-5' exonuclease (proofreading) activity. May be involved in translesional synthesis, in conjunction with the beta clamp from PolIII. This chain is DNA polymerase IV, found in Vibrio vulnificus (strain CMCP6).